The chain runs to 270 residues: UPF0162 protein PA3419 (270 aa).

Belongs to the UPF0162 family.

This Pseudomonas aeruginosa (strain ATCC 15692 / DSM 22644 / CIP 104116 / JCM 14847 / LMG 12228 / 1C / PRS 101 / PAO1) protein is UPF0162 protein PA3419.